Consider the following 123-residue polypeptide: Anti-lipopolysaccharide factor (123 aa).

An N-terminal signal peptide occupies residues 1-26 (MRTRVMAGLCVALVVMCLYMPQPCEA). A disulfide bridge links C55 with C76.

In terms of tissue distribution, strong expression in hemocytes, heart and muscle, with weaker expression detected in gills and hepatopancreas. No expression detected in eyes.

It is found in the secreted. Binds to bacterial LPS and may specifically inhibit the LPS-mediated activation of the hemolymph coagulation. It has a strong antibacterial effect especially on the growth of Gram-negative bacteria. The chain is Anti-lipopolysaccharide factor from Scylla serrata (Mud crab).